A 572-amino-acid chain; its full sequence is Proline--tRNA ligase (572 aa).

The protein belongs to the class-II aminoacyl-tRNA synthetase family. ProS type 1 subfamily. In terms of assembly, homodimer.

It localises to the cytoplasm. The enzyme catalyses tRNA(Pro) + L-proline + ATP = L-prolyl-tRNA(Pro) + AMP + diphosphate. Its function is as follows. Catalyzes the attachment of proline to tRNA(Pro) in a two-step reaction: proline is first activated by ATP to form Pro-AMP and then transferred to the acceptor end of tRNA(Pro). As ProRS can inadvertently accommodate and process non-cognate amino acids such as alanine and cysteine, to avoid such errors it has two additional distinct editing activities against alanine. One activity is designated as 'pretransfer' editing and involves the tRNA(Pro)-independent hydrolysis of activated Ala-AMP. The other activity is designated 'posttransfer' editing and involves deacylation of mischarged Ala-tRNA(Pro). The misacylated Cys-tRNA(Pro) is not edited by ProRS. This Cronobacter sakazakii (strain ATCC BAA-894) (Enterobacter sakazakii) protein is Proline--tRNA ligase.